Reading from the N-terminus, the 94-residue chain is Co-chaperonin GroES (94 aa).

Belongs to the GroES chaperonin family. As to quaternary structure, heptamer of 7 subunits arranged in a ring. Interacts with the chaperonin GroEL.

The protein resides in the cytoplasm. In terms of biological role, together with the chaperonin GroEL, plays an essential role in assisting protein folding. The GroEL-GroES system forms a nano-cage that allows encapsulation of the non-native substrate proteins and provides a physical environment optimized to promote and accelerate protein folding. GroES binds to the apical surface of the GroEL ring, thereby capping the opening of the GroEL channel. In Caldanaerobacter subterraneus subsp. tengcongensis (strain DSM 15242 / JCM 11007 / NBRC 100824 / MB4) (Thermoanaerobacter tengcongensis), this protein is Co-chaperonin GroES.